The following is a 502-amino-acid chain: Thermosome subunit beta (502 aa).

The protein belongs to the TCP-1 chaperonin family. As to quaternary structure, forms a Heterooligomeric complex of two stacked eight-membered rings.

In terms of biological role, molecular chaperone; binds unfolded polypeptides in vitro, and has a weak ATPase activity. This is Thermosome subunit beta (thsB) from Desulfurococcus mucosus (Desulfurococcus mobilis).